Reading from the N-terminus, the 674-residue chain is DNA ligase (674 aa).

NAD(+)-binding positions include 35–39 (DAEYD), 84–85 (SL), and Glu116. The N6-AMP-lysine intermediate role is filled by Lys118. The NAD(+) site is built by Arg139, Glu176, Lys293, and Lys317. Positions 411, 414, 429, and 435 each coordinate Zn(2+). The 82-residue stretch at 593–674 (DGVKPLEGTT…LLALLEEHGV (82 aa)) folds into the BRCT domain.

The protein belongs to the NAD-dependent DNA ligase family. LigA subfamily. It depends on Mg(2+) as a cofactor. Mn(2+) is required as a cofactor.

The catalysed reaction is NAD(+) + (deoxyribonucleotide)n-3'-hydroxyl + 5'-phospho-(deoxyribonucleotide)m = (deoxyribonucleotide)n+m + AMP + beta-nicotinamide D-nucleotide.. DNA ligase that catalyzes the formation of phosphodiester linkages between 5'-phosphoryl and 3'-hydroxyl groups in double-stranded DNA using NAD as a coenzyme and as the energy source for the reaction. It is essential for DNA replication and repair of damaged DNA. This is DNA ligase from Saccharophagus degradans (strain 2-40 / ATCC 43961 / DSM 17024).